Reading from the N-terminus, the 466-residue chain is UDP-N-acetylmuramoylalanine--D-glutamate ligase (466 aa).

121–127 (GTNGKST) provides a ligand contact to ATP.

Belongs to the MurCDEF family.

Its subcellular location is the cytoplasm. It catalyses the reaction UDP-N-acetyl-alpha-D-muramoyl-L-alanine + D-glutamate + ATP = UDP-N-acetyl-alpha-D-muramoyl-L-alanyl-D-glutamate + ADP + phosphate + H(+). Its pathway is cell wall biogenesis; peptidoglycan biosynthesis. Cell wall formation. Catalyzes the addition of glutamate to the nucleotide precursor UDP-N-acetylmuramoyl-L-alanine (UMA). The polypeptide is UDP-N-acetylmuramoylalanine--D-glutamate ligase (Nitrobacter hamburgensis (strain DSM 10229 / NCIMB 13809 / X14)).